We begin with the raw amino-acid sequence, 785 residues long: Altered inheritance of mitochondria protein 3-2 (785 aa).

Disordered stretches follow at residues 33–122 (TGYQ…QPYM), 142–406 (QQVA…SENL), and 418–785 (NVDV…RLHK). Low complexity predominate over residues 91 to 102 (GSSGNSANGSSA). Composition is skewed to polar residues over residues 103 to 122 (TIPT…QPYM) and 143 to 199 (QVAT…QLNI). A compositionally biased stretch (basic and acidic residues) spans 249-260 (KPYDWEEQKTTK). Polar residues-rich tracts occupy residues 283–310 (SRQG…TTTG), 350–366 (ATNN…QNTK), 375–388 (TNKS…SNVM), 395–405 (QMNTKANSSEN), and 455–465 (SSISRDNYNSI). The segment covering 478–497 (NTGEREGAQELKADIAERSQ) has biased composition (basic and acidic residues). The span at 527–556 (AQTSSDIPQKSSLVTDESNISVPNKSQQPM) shows a compositional bias: polar residues. Composition is skewed to basic and acidic residues over residues 587–613 (KSLE…EQLK) and 624–637 (KNMK…DNKN). Residues 659-671 (SLTSEGNHMNLNT) are compositionally biased toward polar residues. Basic and acidic residues-rich tracts occupy residues 672–686 (EKGK…DESK) and 700–710 (FKREELSKEVV).

The protein belongs to the AIM3 family.

The protein localises to the membrane raft. The chain is Altered inheritance of mitochondria protein 3-2 (AIM3-2) from Candida glabrata (strain ATCC 2001 / BCRC 20586 / JCM 3761 / NBRC 0622 / NRRL Y-65 / CBS 138) (Yeast).